Reading from the N-terminus, the 205-residue chain is Small ribosomal subunit protein uS4 (205 aa).

The S4 RNA-binding domain maps to 91-149 (MRLDALVLRAAFARSISQARQLVVHRHILVDGKLVDRPSYSVSPGQTVKVKPKSVPLDP).

It belongs to the universal ribosomal protein uS4 family. In terms of assembly, part of the 30S ribosomal subunit. Contacts protein S5. The interaction surface between S4 and S5 is involved in control of translational fidelity.

Functionally, one of the primary rRNA binding proteins, it binds directly to 16S rRNA where it nucleates assembly of the body of the 30S subunit. With S5 and S12 plays an important role in translational accuracy. The chain is Small ribosomal subunit protein uS4 from Tropheryma whipplei (strain TW08/27) (Whipple's bacillus).